The following is a 485-amino-acid chain: Dynein axonemal assembly factor 3 (485 aa).

This sequence belongs to the DNAAF3 family.

It is found in the cytoplasm. The protein localises to the dynein axonemal particle. Its function is as follows. Required for the assembly of axonemal inner and outer dynein arms. Involved in preassembly of dyneins into complexes before their transport into cilia. The sequence is that of Dynein axonemal assembly factor 3 (dnaaf3) from Xenopus laevis (African clawed frog).